Reading from the N-terminus, the 1622-residue chain is DNA (cytosine-5)-methyltransferase 1 (1622 aa).

Positions 1 to 145 (MPARTAPARV…RRSKSDSETM (145 aa)) are interaction with DNMT3A. Interaction with the PRC2/EED-EZH2 complex regions lie at residues 1–342 (MPAR…VERK) and 304–610 (TPEP…TVIN). S15 carries the post-translational modification Phosphoserine. In terms of domain architecture, DMAP1-binding spans 16–109 (PAGSLPDHVR…TQKANGCPAN (94 aa)). K70 is subject to N6,N6-dimethyllysine; by EHMT2. The segment at 100–360 (TQKANGCPAN…IPKLNPPQCP (261 aa)) is disordered. The span at 126–137 (PRSRPKPRGPRR) shows a compositional bias: basic residues. Phosphoserine is present on S138. K139 carries the post-translational modification N6-methyllysine; by SETD7. Position 140 is a phosphoserine; by PKB/AKT1 (S140). Residues 146 to 213 (IEASSSSVAT…TESRASRAGE (68 aa)) are interaction with DNMT3B. 2 positions are modified to phosphoserine: S149 and S151. Low complexity predominate over residues 149-166 (SSSSVATRRTTRQTTITS). T163 is modified (phosphothreonine). N6-acetyllysine is present on K169. Residues 173–200 (KRKPKEDSEKGNANESAAEERDQDKKRR) carry the Nuclear localization signal motif. 4 stretches are compositionally biased toward basic and acidic residues: residues 176-197 (PKED…DQDK), 207-222 (RASR…ERVR), 237-269 (DDRR…THLD), and 276-300 (KDKR…KEEV). A Phosphothreonine modification is found at T304. Positions 327–556 (KPEPLSIPVQ…NVNRFTEDSL (230 aa)) are DNA replication foci-targeting sequence. Residues C359 and C362 each contribute to the Zn(2+) site. K372 carries the N6-acetyllysine modification. Position 400 is a phosphoserine (S400). Zn(2+) is bound by residues C420 and H424. Phosphoserine is present on residues S515 and S555. The CXXC-type zinc finger occupies 650 to 696 (NTMKRRRCGVCEVCQQPECGKCKACKDMVKFGGTGRSKQACLKRRCP). Positions 657, 660, 663, 668, 671, 674, 690, and 695 each coordinate Zn(2+). An autoinhibitory linker region spans residues 697–758 (NLAVKEADED…TYYWKVSIDE (62 aa)). The tract at residues 702-733 (EADEDEEADDDIPELPSPKKLHQGKKKKQNKD) is disordered. A compositionally biased stretch (acidic residues) spans 703–714 (ADEDEEADDDIP). Residue S718 is modified to Phosphoserine. Basic residues predominate over residues 720-731 (KKLHQGKKKKQN). Position 736 is a phosphoserine (S736). K753 carries the post-translational modification N6-acetyllysine. Residues 759 to 884 (ETLEVGDCVS…QDYARFESPP (126 aa)) enclose the BAH 1 domain. Phosphoserine is present on S882. K895, K961, and K980 each carry N6-acetyllysine. One can recognise a BAH 2 domain in the interval 977–1105 (TYRKYSDYIK…SKTKSFEDPP (129 aa)). The tract at residues 1099–1138 (KSFEDPPNHARSPGNKGKGKGKGKGKGKPQVSEPKEPEAA) is disordered. A run of 6 repeats spans residues 1114–1115 (KG), 1116–1117 (KG), 1118–1119 (KG), 1120–1121 (KG), 1122–1123 (KG), and 1124–1125 (KG). Residues 1114–1127 (KGKGKGKGKGKGKP) are 7 X 2 AA tandem repeats of K-G. Basic residues predominate over residues 1115–1125 (GKGKGKGKGKG). Residues K1116, K1118, K1120, K1122, K1124, and K1126 each carry the N6-acetyllysine modification. One copy of the 7; approximate repeat lies at 1126–1127 (KP). Positions 1126-1622 (KPQVSEPKEP…KGKEETTTED (497 aa)) are interaction with the PRC2/EED-EZH2 complex. Residues 1144 to 1603 (LRTLDVFSGC…LEIKLCLLAS (460 aa)) enclose the SAM-dependent MTase C5-type domain. The catalytic stretch occupies residues 1144–1622 (LRTLDVFSGC…KGKEETTTED (479 aa)). Residues S1151, 1155–1156 (GL), 1173–1174 (EM), 1195–1196 (DC), and C1196 contribute to the S-adenosyl-L-methionine site. The active site involves C1231. K1354 carries the N6-acetyllysine modification. Position 1436 is a phosphoserine (S1436). S-adenosyl-L-methionine contacts are provided by N1582 and V1584. K1613 participates in a covalent cross-link: Glycyl lysine isopeptide (Lys-Gly) (interchain with G-Cter in SUMO2).

This sequence belongs to the class I-like SAM-binding methyltransferase superfamily. C5-methyltransferase family. Homodimer. Forms a stable complex with E2F1, BB1 and HDAC1. Forms a complex with DMAP1 and HDAC2, with direct interaction. Interacts with the PRC2/EED-EZH2 complex. Probably part of a corepressor complex containing ZNF304, TRIM28, SETDB1 and DNMT1. Interacts with UHRF1; promoting its recruitment to hemimethylated DNA. Interacts with USP7, promoting its deubiquitination. Interacts with PCNA. Interacts with MBD2 and MBD3. Interacts with DNMT3A and DNMT3B. Interacts with UBC9. Interacts with CSNK1D. Interacts with HDAC1. Interacts with BAZ2A/TIP5. Interacts with SIRT7. Interacts with ZNF263; recruited to the SIX3 promoter along with other proteins involved in chromatin modification and transcriptional corepression where it contributes to transcriptional repression. Interacts with L3MBTL3 and DCAF5; the interaction requires DNMT1 methylation at Lys-139 and is necessary to target DNMT1 for ubiquitination by the CRL4-DCAF5 E3 ubiquitin ligase complex and proteasomal degradation. Interacts with PHF20L1; the interaction requires DNMT1 methylation at Lys-139 and protects DNMT1 from ubiquitination and proteasomal degradation. In terms of processing, sumoylated; sumoylation increases activity. Acetylation on multiple lysines, mainly by KAT2B/PCAF, regulates cell cycle G(2)/M transition. Deacetylation of Lys-1116 and Lys-1354 by SIRT1 increases methyltransferase activity. Post-translationally, phosphorylation of Ser-151 by CDKs is important for enzymatic activity and protein stability. Phosphorylation of Ser-140 by AKT1 prevents methylation by SETD7 thereby increasing DNMT1 stability. In terms of processing, methylation at Lys-139 by SETD7 is necessary for the regulation of DNMT1 proteasomal degradation. Ubiquitinated by UHRF1; interaction with USP7 counteracts ubiquitination by UHRF1 by promoting deubiquitination and preventing degradation by the proteasome. In terms of tissue distribution, isoforms 0 and 8 are highly expressed in placenta, brain, lung, spleen, kidney, heart, and at much lower levels in liver. Isoform 1 is expressed in cerebellum, isoform 2 in muscle and testis, isoform 3 in lung, isoform 4 in spleen and brain, and isoform 5 in brain.

The protein localises to the nucleus. The catalysed reaction is a 2'-deoxycytidine in DNA + S-adenosyl-L-methionine = a 5-methyl-2'-deoxycytidine in DNA + S-adenosyl-L-homocysteine + H(+). Methylates CpG residues. Preferentially methylates hemimethylated DNA. Associates with DNA replication sites in S phase maintaining the methylation pattern in the newly synthesized strand, that is essential for epigenetic inheritance. Associates with chromatin during G2 and M phases to maintain DNA methylation independently of replication. It is responsible for maintaining methylation patterns established in development. DNA methylation is coordinated with methylation of histones. Mediates transcriptional repression by direct binding to HDAC2. In association with DNMT3B and via the recruitment of CTCFL/BORIS, involved in activation of BAG1 gene expression by modulating dimethylation of promoter histone H3 at H3K4 and H3K9. Probably forms a corepressor complex required for activated KRAS-mediated promoter hypermethylation and transcriptional silencing of tumor suppressor genes (TSGs) or other tumor-related genes in colorectal cancer (CRC) cells. Also required to maintain a transcriptionally repressive state of genes in undifferentiated embryonic stem cells (ESCs). Associates at promoter regions of tumor suppressor genes (TSGs) leading to their gene silencing. Promotes tumor growth. The protein is DNA (cytosine-5)-methyltransferase 1 (Dnmt1) of Rattus norvegicus (Rat).